Consider the following 379-residue polypeptide: Small ribosomal subunit protein uS2cy (379 aa).

The tract at residues 1-94 (MKLVQFFEIG…MGTSSNRAKS (94 aa)) is N-terminal extension. A disordered region spans residues 83–106 (NQMGTSSNRAKSTDTPAVSTSQNV).

Belongs to the universal ribosomal protein uS2 family.

Its subcellular location is the plastid. The protein resides in the chloroplast. This Tetradesmus obliquus (Green alga) protein is Small ribosomal subunit protein uS2cy (rps2-2).